Reading from the N-terminus, the 205-residue chain is Metalloproteinase inhibitor 1 (205 aa).

Residues 1–24 (MMAPFASLASGILLLLSLIASSKA) form the signal peptide. C25 is a Zn(2+) binding site. Positions 25–28 (CSCA) are involved in metalloproteinase-binding. 6 disulfide bridges follow: C25-C94, C27-C123, C37-C148, C151-C197, C156-C161, and C169-C189. Positions 25–148 (CSCAPPHPQT…AFSKTYSAGC (124 aa)) constitute an NTR domain. A glycan (N-linked (GlcNAc...) asparagine) is linked at N54. Residues 91–92 (ES) form an involved in metalloproteinase-binding region. A glycan (N-linked (GlcNAc...) asparagine) is linked at N102. S179 carries the phosphoserine modification.

This sequence belongs to the protease inhibitor I35 (TIMP) family. Interacts with MMP1, MMP3, MMP10 and MMP13, but has only very low affinity for MMP14. Interacts with CD63; identified in a complex with CD63 and ITGB1. The activity of TIMP1 is dependent on the presence of disulfide bonds. Post-translationally, N-glycosylated. As to expression, found in fetal and adult tissues. Highest levels are found in bone. Also found in lung, ovary and uterus.

It is found in the secreted. In terms of biological role, metalloproteinase inhibitor that functions by forming one to one complexes with target metalloproteinases, such as collagenases, and irreversibly inactivates them by binding to their catalytic zinc cofactor. Acts on MMP1, MMP2, MMP3, MMP7, MMP8, MMP9, MMP10, MMP11, MMP12, MMP13 and MMP16. Does not act on MMP14. Also functions as a growth factor that regulates cell differentiation, migration and cell death and activates cellular signaling cascades via CD63 and ITGB1. Plays a role in integrin signaling. This is Metalloproteinase inhibitor 1 (Timp1) from Mus musculus (Mouse).